Reading from the N-terminus, the 449-residue chain is Glucose-6-phosphate isomerase (449 aa).

Catalysis depends on E291, which acts as the Proton donor. Catalysis depends on residues H312 and K426.

Belongs to the GPI family.

The protein resides in the cytoplasm. The enzyme catalyses alpha-D-glucose 6-phosphate = beta-D-fructose 6-phosphate. The protein operates within carbohydrate biosynthesis; gluconeogenesis. It functions in the pathway carbohydrate degradation; glycolysis; D-glyceraldehyde 3-phosphate and glycerone phosphate from D-glucose: step 2/4. Functionally, catalyzes the reversible isomerization of glucose-6-phosphate to fructose-6-phosphate. In Streptococcus pneumoniae serotype 19F (strain G54), this protein is Glucose-6-phosphate isomerase.